Consider the following 288-residue polypeptide: MSQISAKDVKELRDTTGVGMMECKKALEETGGDMQKAVEYLRKKGAAMAAKRADREASEGAVCILMSDDQKTGVILELNCETDFVARGEVFTGFANELAELALANNCESREDLLAINLGEAYGNEKVEDALKSMTGKVGEKLELKRLAMLKAEDGVLESYIHPGSQLGALIAVETDKPEETKALAKDLAMQVAAASPIEVGRDAVPAELVEKEKEIYRQQALAEGKKEEFVDKIVMGRINKYYQEVVLTEQTFIKDQNARVSGVLDDFMKKNQAQVKIKAFVRYQLGA.

The involved in Mg(2+) ion dislocation from EF-Tu stretch occupies residues 82–85 (TDFV).

This sequence belongs to the EF-Ts family.

It is found in the cytoplasm. Functionally, associates with the EF-Tu.GDP complex and induces the exchange of GDP to GTP. It remains bound to the aminoacyl-tRNA.EF-Tu.GTP complex up to the GTP hydrolysis stage on the ribosome. The protein is Elongation factor Ts of Chlorobaculum parvum (strain DSM 263 / NCIMB 8327) (Chlorobium vibrioforme subsp. thiosulfatophilum).